A 283-amino-acid chain; its full sequence is Non-selective voltage-gated ion channel VDAC3 (283 aa).

C2 carries the post-translational modification N-acetylcysteine. Phosphothreonine is present on T4. N6-acetyllysine occurs at positions 12, 15, and 20. The next 2 membrane-spanning stretches (beta stranded) occupy residues 26–35 (MVKIDLKTKS) and 39–47 (VEFSTSGHA). Residue K53 forms a Glycyl lysine isopeptide (Lys-Gly) (interchain with G-Cter in ubiquitin) linkage. The next 3 membrane-spanning stretches (beta stranded) occupy residues 54-64 (ASGNLETKYKV), 69-76 (LTFTQKWN), and 80-89 (TLGTEISWEN). K90 carries the post-translational modification N6-acetyllysine. Residues 95-104 (LKLTLDTIFV) form a beta stranded membrane-spanning segment. Glycyl lysine isopeptide (Lys-Gly) (interchain with G-Cter in ubiquitin) cross-links involve residues K109 and K110. The next 10 beta stranded transmembrane spans lie at 111-120 (SGKLKASYRR), 123-130 (FSLGSNVD), 137-145 (TIYGWAVLA), 150-158 (LAGYQMSFD), 163-175 (KLSQ…GYKA), 178-185 (FQLHTHVN), 189-198 (EFGGSIYQKV), 202-211 (IETSINLAWT), 218-227 (RFGIAAKYKL), and 231-238 (TSLSAKVN). S241 is modified (phosphoserine). NAD(+) contacts are provided by residues 242–244 (LIG) and 260–264 (SALID). 2 beta stranded membrane-spanning segments follow: residues 242–251 (LIGLGYTQTL) and 254–263 (GVKLTLSALI). An N6-acetyllysine; alternate modification is found at K266. A Glycyl lysine isopeptide (Lys-Gly) (interchain with G-Cter in ubiquitin); alternate cross-link involves residue K266. The beta stranded transmembrane segment at 273 to 282 (HKVGLGFELE) threads the bilayer.

This sequence belongs to the eukaryotic mitochondrial porin family. As to quaternary structure, interacts with ARMC12 in a TBC1D21-dependent manner. Interacts with MISFA. Post-translationally, ubiquitinated by PRKN during mitophagy, leading to its degradation and enhancement of mitophagy. Deubiquitinated by USP30. In terms of tissue distribution, highest levels of expression detected in testis, less but still abundant expression in heart, kidney, brain, and skeletal muscle.

The protein localises to the mitochondrion outer membrane. The protein resides in the membrane. It carries out the reaction chloride(in) = chloride(out). The catalysed reaction is K(+)(in) = K(+)(out). Its function is as follows. Non-selective voltage-gated ion channel that mediates the transport of anions and cations through the mitochondrion outer membrane and plasma membrane. Forms a high-conducting channel with a stable open state and a voltage-induced closure with a mild preference for anions over cations. Involved in male fertility and sperm mitochondrial sheath formation. This Mus musculus (Mouse) protein is Non-selective voltage-gated ion channel VDAC3.